Reading from the N-terminus, the 190-residue chain is Peptide deformylase (190 aa).

Residues Cys-106 and His-148 each contribute to the Fe cation site. The active site involves Glu-149. Position 152 (His-152) interacts with Fe cation.

Belongs to the polypeptide deformylase family. Requires Fe(2+) as cofactor.

The enzyme catalyses N-terminal N-formyl-L-methionyl-[peptide] + H2O = N-terminal L-methionyl-[peptide] + formate. Its function is as follows. Removes the formyl group from the N-terminal Met of newly synthesized proteins. Requires at least a dipeptide for an efficient rate of reaction. N-terminal L-methionine is a prerequisite for activity but the enzyme has broad specificity at other positions. This chain is Peptide deformylase, found in Methylacidiphilum infernorum (isolate V4) (Methylokorus infernorum (strain V4)).